The sequence spans 296 residues: Bifunctional protein FolD 1 (296 aa).

NADP(+) is bound by residues 167–169 (GCG) and isoleucine 235.

This sequence belongs to the tetrahydrofolate dehydrogenase/cyclohydrolase family. In terms of assembly, homodimer.

It catalyses the reaction (6R)-5,10-methylene-5,6,7,8-tetrahydrofolate + NADP(+) = (6R)-5,10-methenyltetrahydrofolate + NADPH. The enzyme catalyses (6R)-5,10-methenyltetrahydrofolate + H2O = (6R)-10-formyltetrahydrofolate + H(+). It functions in the pathway one-carbon metabolism; tetrahydrofolate interconversion. Its function is as follows. Catalyzes the oxidation of 5,10-methylenetetrahydrofolate to 5,10-methenyltetrahydrofolate and then the hydrolysis of 5,10-methenyltetrahydrofolate to 10-formyltetrahydrofolate. In Nocardioides sp. (strain ATCC BAA-499 / JS614), this protein is Bifunctional protein FolD 1.